Here is a 254-residue protein sequence, read N- to C-terminus: Acetylglutamate kinase (254 aa).

Substrate contacts are provided by residues Gly40 to Gly41, Arg62, and Asn158.

The protein belongs to the acetylglutamate kinase family. ArgB subfamily.

The protein localises to the cytoplasm. The enzyme catalyses N-acetyl-L-glutamate + ATP = N-acetyl-L-glutamyl 5-phosphate + ADP. The protein operates within amino-acid biosynthesis; L-arginine biosynthesis; N(2)-acetyl-L-ornithine from L-glutamate: step 2/4. In terms of biological role, catalyzes the ATP-dependent phosphorylation of N-acetyl-L-glutamate. This chain is Acetylglutamate kinase, found in Chloroflexus aurantiacus (strain ATCC 29366 / DSM 635 / J-10-fl).